We begin with the raw amino-acid sequence, 165 residues long: IQSTSMDQGSLTEDSMNSFIRTLIQAGIWKNKVPKQTARTKDGMQTTVKRTKAEAEAVASEGTRLGFQPVVLVDAELLRQQRRFSSPRVLLSENTPLEPPPLYLMEEPAVLNRTSRRKRYAEGKSHRGEYSVCDSESRWVTDKSSAVDIRGHQVTVLGEIRMGPS.

An N-terminal signal peptide occupies residues 1–3 (IQS). A propeptide spanning residues 4–119 (TSMDQGSLTE…VLNRTSRRKR (116 aa)) is cleaved from the precursor. An N-linked (GlcNAc...) asparagine glycan is attached at asparagine 112.

The protein belongs to the NGF-beta family.

The protein localises to the secreted. Functionally, seems to promote the survival of visceral and proprioceptive sensory neurons. The protein is Neurotrophin-3 (NTF3) of Calabaria reinhardtii (Calabar boa).